The following is a 497-amino-acid chain: Probable small intestine urate exporter (497 aa).

5 N-linked (GlcNAc...) asparagine glycosylation sites follow: N47, N56, N66, N75, and N90. Transmembrane regions (helical) follow at residues 149 to 169 (SFLT…LIVL), 171 to 191 (IVQG…WVKW), 203 to 223 (IAGS…GLLC), 230 to 250 (YVFY…FPLI), 292 to 312 (LPLW…YTIM), 332 to 352 (ILSA…GLLA), 368 to 388 (KLFT…LPWV), 398 to 418 (FLVL…VNFL), 431 to 451 (LLQV…GFFI), and 461 to 481 (NVFL…LIFG).

It belongs to the major facilitator superfamily. Sodium/anion cotransporter family. Abundantly expressed in pancreas, liver, colon and small intestine, less in kidney. Not detected in the adrenal glands, brain, placenta, heart, testis, skeletal muscle, and lungs.

The protein localises to the apical cell membrane. The enzyme catalyses 3 Na(+)(out) + phosphate(out) = 3 Na(+)(in) + phosphate(in). It catalyses the reaction urate(out) + n chloride(in) = urate(in) + n chloride(out). The catalysed reaction is L-thyroxine(out) = L-thyroxine(in). It carries out the reaction 3,3',5-triiodo-L-thyronine(out) = 3,3',5-triiodo-L-thyronine(in). Its function is as follows. Acts as a membrane potential-dependent organic anion transporter, the transport requires a low concentration of chloride ions. Mediates chloride-dependent transport of urate. Mediates sodium-independent high affinity transport of thyroid hormones including L-thyroxine (T4) and 3,3',5-triiodo-L-thyronine (T3). Can actively transport inorganic phosphate into cells via Na(+) cotransport. This chain is Probable small intestine urate exporter (SLC17A4), found in Homo sapiens (Human).